The chain runs to 411 residues: Pyridinium-3,5-bisthiocarboxylic acid mononucleotide nickel insertion protein (411 aa).

Belongs to the LarC family.

The enzyme catalyses Ni(II)-pyridinium-3,5-bisthiocarboxylate mononucleotide = pyridinium-3,5-bisthiocarboxylate mononucleotide + Ni(2+). Functionally, involved in the biosynthesis of a nickel-pincer cofactor ((SCS)Ni(II) pincer complex). Binds Ni(2+), and functions in nickel delivery to pyridinium-3,5-bisthiocarboxylic acid mononucleotide (P2TMN), to form the mature cofactor. Is thus probably required for the activation of nickel-pincer cofactor-dependent enzymes. This is Pyridinium-3,5-bisthiocarboxylic acid mononucleotide nickel insertion protein from Geobacillus kaustophilus (strain HTA426).